Here is a 578-residue protein sequence, read N- to C-terminus: Thrombomodulin (578 aa).

Residues 1 to 16 (MLRVLLLGVLAPAGLG) form the signal peptide. Residues 17–518 (LPTPAQPQPR…SPSPVGPVHS (502 aa)) are Extracellular-facing. The region spanning 31–167 (MEHDCFQLFR…CAAEADGFLC (137 aa)) is the C-type lectin domain. A glycan (N-linked (GlcNAc...) asparagine) is linked at Asn114. 19 disulfides stabilise this stretch: Cys137–Cys158, Cys246–Cys257, Cys253–Cys266, Cys268–Cys281, Cys289–Cys297, Cys293–Cys309, Cys311–Cys324, Cys330–Cys341, Cys337–Cys350, Cys352–Cys363, Cys370–Cys379, Cys375–Cys389, Cys391–Cys405, Cys409–Cys414, Cys418–Cys426, Cys428–Cys440, Cys446–Cys455, Cys451–Cys464, and Cys466–Cys480. EGF-like domains follow at residues 242 to 282 (GAWD…RSCA) and 285 to 325 (AEHS…HRCE). Asn300 carries an N-linked (GlcNAc...) asparagine glycan. One can recognise an EGF-like 3; calcium-binding domain in the interval 326-364 (DVDDCIQVPSLCPQLCVNTRGAFECHCYPGYELVDNECV). A (3R)-3-hydroxyasparagine modification is found at Asn343. 2 EGF-like domains span residues 366–406 (PVDP…HRCQ) and 405–441 (CQMF…FMCT). Asn410 is a glycosylation site (N-linked (GlcNAc...) asparagine). One can recognise an EGF-like 6; calcium-binding domain in the interval 442-481 (DIDECENGECPEACRNLPGTYECICGPDSPLAGQVATDCG). The interval 483–512 (IISDPDGDSDSGSGEPPVTPTPGVTPSPSP) is disordered. Residues Ser493 and Ser495 are each glycosylated (O-linked (Xyl...) (chondroitin sulfate) serine). A compositionally biased stretch (pro residues) spans 499–512 (PVTPTPGVTPSPSP). The helical transmembrane segment at 519–539 (GVLIGISIASLSLVVALLALL) threads the bilayer. Residues 540–578 (CHLRKKQGAPRAELEYKCGAPAKEVVLQHVRTEQMPQKL) lie on the Cytoplasmic side of the membrane.

As to quaternary structure, interacts with ITGAL, ITGAM and ITGB2. Interacts with thrombin/F2; this interaction switches the specificity of thrombin from a procoagulant to an anticoagulant and antifibrinolytic protease. Interacts with ANGP1 and ANGP2; these interactions significantly inhibit the generation of activated PC and TAFIa/CPB2 by the thrombin/thrombomodulin complex. Interacts with PF4; this interaction enhances generation of activated protein C. Interacts with HMGB1; this interaction inhibits HMGB1 inflammatory activity. Post-translationally, N-glycosylated. In terms of processing, the iron and 2-oxoglutarate dependent 3-hydroxylation of aspartate and asparagine is (R) stereospecific within EGF domains. As to expression, expressed in lung, liver, spleen, kidney, pancreas and lymph node. Low expression in heart, cerebrum, urinary bladder and uterus.

The protein resides in the membrane. Its function is as follows. Endothelial cell receptor that plays a critical role in regulating several physiological processes including hemostasis, coagulation, fibrinolysis, inflammation, and angiogenesis. Acts as a cofactor for thrombin activation of protein C/PROC on the surface of vascular endothelial cells leading to initiation of the activated protein C anticoagulant pathway. Also accelerates the activation of the plasma carboxypeptidase B2/CPB2, which catalyzes removal of C-terminal basic amino acids from its substrates including kinins or anaphylatoxins leading to fibrinolysis inhibition. Plays critical protective roles in changing the cleavage specificity of protease-activated receptor 1/PAR1, inhibiting endothelial cell permeability and inflammation. Suppresses inflammation distinctly from its anticoagulant cofactor activity by sequestering HMGB1 thereby preventing it from engaging cellular receptors such as RAGE and contributing to the inflammatory response. The polypeptide is Thrombomodulin (THBD) (Canis lupus familiaris (Dog)).